The sequence spans 343 residues: L-threonine 3-dehydrogenase (343 aa).

C40 serves as a coordination point for Zn(2+). Residues T42 and H45 each act as charge relay system in the active site. 6 residues coordinate Zn(2+): H65, E66, C95, C98, C101, and C109. NAD(+) is bound by residues I177, D197, R202, L264–I266, and I288–Y289.

Belongs to the zinc-containing alcohol dehydrogenase family. As to quaternary structure, homotetramer. Zn(2+) is required as a cofactor.

Its subcellular location is the cytoplasm. The catalysed reaction is L-threonine + NAD(+) = (2S)-2-amino-3-oxobutanoate + NADH + H(+). Its pathway is amino-acid degradation; L-threonine degradation via oxydo-reductase pathway; glycine from L-threonine: step 1/2. Catalyzes the NAD(+)-dependent oxidation of L-threonine to 2-amino-3-ketobutyrate. The polypeptide is L-threonine 3-dehydrogenase (Aliivibrio fischeri (strain MJ11) (Vibrio fischeri)).